Consider the following 268-residue polypeptide: HLA class II histocompatibility antigen, DQ beta 2 chain (268 aa).

An N-terminal signal peptide occupies residues 1–32 (MSWKMALQIPGGFWAAAVTVMLVMLSTPVAEA). A beta-1 region spans residues 33 to 126 (RDFPKDFLVQ…ELRTTLQRQV (94 aa)). Residues 33 to 229 (RDFPKDFLVQ…RAQSESAQSK (197 aa)) lie on the Extracellular side of the membrane. 2 disulfide bridges follow: C47/C110 and C148/C204. A glycan (N-linked (GlcNAc...) asparagine) is linked at N51. The interval 127-229 (EPTVTISPSR…RAQSESAQSK (103 aa)) is beta-2. The 89-residue stretch at 128–216 (PTVTISPSRT…EHPSLQSPIT (89 aa)) folds into the Ig-like C1-type domain. Residues 230–250 (MLSGIGGFVLGLIFLGLGLII) traverse the membrane as a helical segment. The Cytoplasmic portion of the chain corresponds to 251-268 (RHRGQKGPRGPPPAGLLH).

This sequence belongs to the MHC class II family. In terms of assembly, heterodimer of an alpha and a beta subunit; also referred as MHC class II molecule. Dimer formation with HLA-DQA2, but not with HLA-DQA1, is required for efficient exit from the endoplasmic reticulum (ER). In the ER, forms a heterononamer; 3 MHC class II molecules bind to a CD74 homotrimer (also known as invariant chain or HLA class II histocompatibility antigen gamma chain). In the endosomal/lysosomal system; CD74 undergoes sequential degradation by various proteases; leaving a small fragment termed CLIP on each MHC class II molecule. MHC class II molecule interacts with HLA_DM, and HLA_DO in B-cells, in order to release CLIP and facilitate the binding of antigenic peptides. Association with HLA-DMA also occurs in skin Langerhans cells, in post-Golgi compartments. In terms of tissue distribution, restricted to skin Langerhans cells (at protein level).

It localises to the cell membrane. The protein resides in the endoplasmic reticulum membrane. The protein localises to the golgi apparatus. Its subcellular location is the trans-Golgi network membrane. It is found in the endosome membrane. It localises to the lysosome membrane. Binds peptides derived from antigens that access the endocytic route of antigen presenting cells (APC) and presents them on the cell surface for recognition by the CD4 T-cells. The peptide binding cleft accommodates peptides of 10-30 residues. The peptides presented by MHC class II molecules are generated mostly by degradation of proteins that access the endocytic route, where they are processed by lysosomal proteases and other hydrolases. Exogenous antigens that have been endocytosed by the APC are thus readily available for presentation via MHC II molecules, and for this reason this antigen presentation pathway is usually referred to as exogenous. As membrane proteins on their way to degradation in lysosomes as part of their normal turn-over are also contained in the endosomal/lysosomal compartments, exogenous antigens must compete with those derived from endogenous components. Autophagy is also a source of endogenous peptides, autophagosomes constitutively fuse with MHC class II loading compartments. In addition to APCs, other cells of the gastrointestinal tract, such as epithelial cells, express MHC class II molecules and CD74 and act as APCs, which is an unusual trait of the GI tract. To produce a MHC class II molecule that presents an antigen, three MHC class II molecules (heterodimers of an alpha and a beta chain) associate with a CD74 trimer in the ER to form a heterononamer. Soon after the entry of this complex into the endosomal/lysosomal system where antigen processing occurs, CD74 undergoes a sequential degradation by various proteases, including CTSS and CTSL, leaving a small fragment termed CLIP (class-II-associated invariant chain peptide). The removal of CLIP is facilitated by HLA-DM via direct binding to the alpha-beta-CLIP complex so that CLIP is released. HLA-DM stabilizes MHC class II molecules until primary high affinity antigenic peptides are bound. The MHC II molecule bound to a peptide is then transported to the cell membrane surface. In B-cells, the interaction between HLA-DM and MHC class II molecules is regulated by HLA-DO. Primary dendritic cells (DCs) also to express HLA-DO. Lysosomal microenvironment has been implicated in the regulation of antigen loading into MHC II molecules, increased acidification produces increased proteolysis and efficient peptide loading. The polypeptide is HLA class II histocompatibility antigen, DQ beta 2 chain (HLA-DQB2) (Homo sapiens (Human)).